A 199-amino-acid polypeptide reads, in one-letter code: NAD(P)H dehydrogenase (quinone) (199 aa).

Residues 4–190 (VLVLYYSAYG…GGARYQGKVI (187 aa)) form the Flavodoxin-like domain. Residues 10-15 (SAYGHI) and 78-80 (TRF) each bind FMN. Tyr-12 contributes to the NAD(+) binding site. Trp-98 contacts substrate. FMN is bound by residues 113-119 (STASQHG) and His-134.

The protein belongs to the WrbA family. FMN is required as a cofactor.

The catalysed reaction is a quinone + NADH + H(+) = a quinol + NAD(+). It catalyses the reaction a quinone + NADPH + H(+) = a quinol + NADP(+). The polypeptide is NAD(P)H dehydrogenase (quinone) (Rhodopseudomonas palustris (strain BisB18)).